A 474-amino-acid polypeptide reads, in one-letter code: tRNA-2-methylthio-N(6)-dimethylallyladenosine synthase (474 aa).

In terms of domain architecture, MTTase N-terminal spans 3–120 (KKLHIKTWGC…LPEMIDQIRD (118 aa)). [4Fe-4S] cluster is bound by residues C12, C49, C83, C157, C161, and C164. Residues 143–375 (RADGPSAFVS…QDRITQQAMR (233 aa)) form the Radical SAM core domain. A TRAM domain is found at 378-441 (RQMLGTVQRI…TNSLRGTFVR (64 aa)).

This sequence belongs to the methylthiotransferase family. MiaB subfamily. Monomer. Requires [4Fe-4S] cluster as cofactor.

The protein resides in the cytoplasm. The enzyme catalyses N(6)-dimethylallyladenosine(37) in tRNA + (sulfur carrier)-SH + AH2 + 2 S-adenosyl-L-methionine = 2-methylsulfanyl-N(6)-dimethylallyladenosine(37) in tRNA + (sulfur carrier)-H + 5'-deoxyadenosine + L-methionine + A + S-adenosyl-L-homocysteine + 2 H(+). Catalyzes the methylthiolation of N6-(dimethylallyl)adenosine (i(6)A), leading to the formation of 2-methylthio-N6-(dimethylallyl)adenosine (ms(2)i(6)A) at position 37 in tRNAs that read codons beginning with uridine. In Shewanella sediminis (strain HAW-EB3), this protein is tRNA-2-methylthio-N(6)-dimethylallyladenosine synthase.